A 104-amino-acid chain; its full sequence is MHPHLDVNNQKQCADLIRALEECHKSFGKFFGECNTIKYELKACLTKDRNDKARLNRENARMRKKVIEENRKKEEIEERILTDRILQQERKKSHANEGAGDNNN.

The CHCH domain occupies 10–52; the sequence is QKQCADLIRALEECHKSFGKFFGECNTIKYELKACLTKDRNDK. 2 consecutive short sequence motifs (cx9C motif) follow at residues 13-23 and 34-44; these read CADLIRALEEC and CNTIKYELKAC. Cystine bridges form between C13/C44 and C23/C34.

Belongs to the CMC family.

The protein localises to the mitochondrion inner membrane. Functionally, required for mitochondrial cytochrome c oxidase (COX) assembly and respiration. In Schizosaccharomyces pombe (strain 972 / ATCC 24843) (Fission yeast), this protein is COX assembly mitochondrial protein 1 (cmc1).